Here is a 464-residue protein sequence, read N- to C-terminus: Argininosuccinate lyase (464 aa).

This sequence belongs to the lyase 1 family. Argininosuccinate lyase subfamily.

The protein resides in the cytoplasm. The enzyme catalyses 2-(N(omega)-L-arginino)succinate = fumarate + L-arginine. Its pathway is amino-acid biosynthesis; L-arginine biosynthesis; L-arginine from L-ornithine and carbamoyl phosphate: step 3/3. The polypeptide is Argininosuccinate lyase (Streptococcus suis (strain 98HAH33)).